The chain runs to 74 residues: Cytochrome c oxidase subunit 2 (74 aa).

At 1 to 14 the chain is on the mitochondrial intermembrane side; the sequence is MAHPSQLGLQDAAS. A helical membrane pass occupies residues 15-45; that stretch reads PVMEELLHFHDHALMIVFLISTLVLYIIVAM. Topologically, residues 46–74 are mitochondrial matrix; it reads VSTKLTDKYTIDSQEIEIVWTVLPAVILI.

The protein belongs to the cytochrome c oxidase subunit 2 family. Component of the cytochrome c oxidase (complex IV, CIV), a multisubunit enzyme composed of 14 subunits. The complex is composed of a catalytic core of 3 subunits MT-CO1, MT-CO2 and MT-CO3, encoded in the mitochondrial DNA, and 11 supernumerary subunits COX4I, COX5A, COX5B, COX6A, COX6B, COX6C, COX7A, COX7B, COX7C, COX8 and NDUFA4, which are encoded in the nuclear genome. The complex exists as a monomer or a dimer and forms supercomplexes (SCs) in the inner mitochondrial membrane with NADH-ubiquinone oxidoreductase (complex I, CI) and ubiquinol-cytochrome c oxidoreductase (cytochrome b-c1 complex, complex III, CIII), resulting in different assemblies (supercomplex SCI(1)III(2)IV(1) and megacomplex MCI(2)III(2)IV(2)). Found in a complex with TMEM177, COA6, COX18, COX20, SCO1 and SCO2. Interacts with TMEM177 in a COX20-dependent manner. Interacts with COX20. Interacts with COX16. Requires Cu cation as cofactor.

It localises to the mitochondrion inner membrane. It catalyses the reaction 4 Fe(II)-[cytochrome c] + O2 + 8 H(+)(in) = 4 Fe(III)-[cytochrome c] + 2 H2O + 4 H(+)(out). Component of the cytochrome c oxidase, the last enzyme in the mitochondrial electron transport chain which drives oxidative phosphorylation. The respiratory chain contains 3 multisubunit complexes succinate dehydrogenase (complex II, CII), ubiquinol-cytochrome c oxidoreductase (cytochrome b-c1 complex, complex III, CIII) and cytochrome c oxidase (complex IV, CIV), that cooperate to transfer electrons derived from NADH and succinate to molecular oxygen, creating an electrochemical gradient over the inner membrane that drives transmembrane transport and the ATP synthase. Cytochrome c oxidase is the component of the respiratory chain that catalyzes the reduction of oxygen to water. Electrons originating from reduced cytochrome c in the intermembrane space (IMS) are transferred via the dinuclear copper A center (CU(A)) of subunit 2 and heme A of subunit 1 to the active site in subunit 1, a binuclear center (BNC) formed by heme A3 and copper B (CU(B)). The BNC reduces molecular oxygen to 2 water molecules using 4 electrons from cytochrome c in the IMS and 4 protons from the mitochondrial matrix. This chain is Cytochrome c oxidase subunit 2 (mt-co2), found in Megalops atlanticus (Tarpon).